Consider the following 203-residue polypeptide: Small ribosomal subunit protein uS4 (203 aa).

The S4 RNA-binding domain occupies 93–173; the sequence is RRFDNVVFRS…IPSWIQVDKA (81 aa).

Belongs to the universal ribosomal protein uS4 family. In terms of assembly, part of the 30S ribosomal subunit. Contacts protein S5. The interaction surface between S4 and S5 is involved in control of translational fidelity.

Its function is as follows. One of the primary rRNA binding proteins, it binds directly to 16S rRNA where it nucleates assembly of the body of the 30S subunit. With S5 and S12 plays an important role in translational accuracy. The sequence is that of Small ribosomal subunit protein uS4 from Chlorobium phaeobacteroides (strain DSM 266 / SMG 266 / 2430).